The following is a 224-amino-acid chain: 7-cyano-7-deazaguanine synthase (224 aa).

10 to 20 (LSGGLDSATVV) contributes to the ATP binding site. Zn(2+) contacts are provided by Cys189, Cys199, Cys202, and Cys205.

This sequence belongs to the QueC family. Zn(2+) is required as a cofactor.

It catalyses the reaction 7-carboxy-7-deazaguanine + NH4(+) + ATP = 7-cyano-7-deazaguanine + ADP + phosphate + H2O + H(+). It participates in purine metabolism; 7-cyano-7-deazaguanine biosynthesis. Catalyzes the ATP-dependent conversion of 7-carboxy-7-deazaguanine (CDG) to 7-cyano-7-deazaguanine (preQ(0)). The chain is 7-cyano-7-deazaguanine synthase from Pseudomonas aeruginosa (strain LESB58).